The primary structure comprises 451 residues: UDP-N-acetylmuramoylalanine--D-glutamate ligase (451 aa).

An ATP-binding site is contributed by 118–124; that stretch reads GTKGKST.

This sequence belongs to the MurCDEF family.

The protein localises to the cytoplasm. It carries out the reaction UDP-N-acetyl-alpha-D-muramoyl-L-alanine + D-glutamate + ATP = UDP-N-acetyl-alpha-D-muramoyl-L-alanyl-D-glutamate + ADP + phosphate + H(+). It participates in cell wall biogenesis; peptidoglycan biosynthesis. Cell wall formation. Catalyzes the addition of glutamate to the nucleotide precursor UDP-N-acetylmuramoyl-L-alanine (UMA). The chain is UDP-N-acetylmuramoylalanine--D-glutamate ligase from Borreliella afzelii (strain PKo) (Borrelia afzelii).